Here is a 310-residue protein sequence, read N- to C-terminus: L-lactate dehydrogenase (310 aa).

Residues 10–11, aspartate 32, tyrosine 62, and 76–77 each bind NAD(+); these read MV and GV. Substrate-binding positions include glutamine 79, arginine 85, and 117–120; that span reads NPVD. Residues 115 to 117 and serine 140 contribute to the NAD(+) site; that span reads ATN. 145-148 lines the substrate pocket; it reads DTAR. Beta-D-fructose 1,6-bisphosphate is bound by residues arginine 150 and 162 to 167; that span reads QSVHAY. Histidine 172 (proton acceptor) is an active-site residue. Tyrosine 218 carries the phosphotyrosine modification. Threonine 227 contributes to the substrate binding site.

Belongs to the LDH/MDH superfamily. LDH family. Homotetramer.

It localises to the cytoplasm. It carries out the reaction (S)-lactate + NAD(+) = pyruvate + NADH + H(+). It participates in fermentation; pyruvate fermentation to lactate; (S)-lactate from pyruvate: step 1/1. Its activity is regulated as follows. Allosterically activated by fructose 1,6-bisphosphate (FBP). It binds two fructose 1,6-bisphosphate (FBP) molecules per tetramer. Its function is as follows. Catalyzes the conversion of lactate to pyruvate. The chain is L-lactate dehydrogenase from Thermus caldophilus.